Here is a 136-residue protein sequence, read N- to C-terminus: uncharacterized protein (136 aa).

The helical transmembrane segment at 7-27 (ANVLAILLVSLFLINGLVFLS) threads the bilayer.

It localises to the membrane. This is an uncharacterized protein from Mycoplasma pneumoniae (strain ATCC 29342 / M129 / Subtype 1) (Mycoplasmoides pneumoniae).